The chain runs to 135 residues: MSSSNNSVVYWGTGRRKTSVARVRLVPGTGTITINGRPGDHYLNFNPAYLAAVKAPLQTLGLNEQYDVLVNVHGGGLTGQADAIKQGAARALCELSADNRKPLKTEGHLSRDPRAKERRKYGLKKARKAPQFSKR.

The disordered stretch occupies residues 96–135 (SADNRKPLKTEGHLSRDPRAKERRKYGLKKARKAPQFSKR). The span at 97-115 (ADNRKPLKTEGHLSRDPRA) shows a compositional bias: basic and acidic residues. Residues 116-135 (KERRKYGLKKARKAPQFSKR) are compositionally biased toward basic residues.

Belongs to the universal ribosomal protein uS9 family.

The protein is Small ribosomal subunit protein uS9 of Prochlorococcus marinus (strain MIT 9303).